The sequence spans 511 residues: E3 ubiquitin-protein ligase TRIM7 (511 aa).

The segment at 29 to 82 (CSICLELFREPVSVECGHSFCRACIGRCWERPGAGSVGAATRAPPFPLPCPQCR) adopts an RING-type zinc-finger fold. Residue Ser-107 is modified to Phosphoserine; by RPS6KA5. The B box-type zinc-finger motif lies at 125–166 (AAAARCGQHGEPFKLYCQDDGRAICVVCDRAREHREHAVLPL). Cys-130, His-133, Cys-152, and His-158 together coordinate Zn(2+). Positions 166–263 (LDEAVQEAKE…AQLGVEITQL (98 aa)) form a coiled coil. The region spanning 324–511 (MLKKFKEDLR…STGTYLRIWP (188 aa)) is the B30.2/SPRY domain.

It belongs to the TRIM/RBCC family. As to quaternary structure, forms homodimers. Interacts with GNIP2. Interacts with GYG1. Interacts with RNF187 (via C-terminus). Phosphorylated at Ser-107 by RPS6KA5/MSK1, which stimulates the ubiquitin ligase activity. In terms of processing, auto-ubiquitinates via 'Lys-63'-linked polyubiquitination. Skeletal muscle and placenta, at lower levels in heart, brain and pancreas. Isoform 1 is widely expressed with high level in testis, kidney and heart.

It localises to the nucleus. The protein localises to the cytoplasm. The protein resides in the golgi apparatus. The catalysed reaction is S-ubiquitinyl-[E2 ubiquitin-conjugating enzyme]-L-cysteine + [acceptor protein]-L-lysine = [E2 ubiquitin-conjugating enzyme]-L-cysteine + N(6)-ubiquitinyl-[acceptor protein]-L-lysine.. It participates in protein modification; protein ubiquitination. E3 ubiquitin-protein ligase that have both tumor-promoting and tumor-suppressing activities and functions in several biological processes including innate immunity, regulation of ferroptosis as well as cell proliferation and migration. Acts as an antiviral effector against multiple viruses by targeting specific viral proteins for ubiquitination and degradation including norovirus NTPase protein or SARS-CoV-2 NSP5 and NSP8 proteins. Mechanistically, recognizes the C-terminal glutamine-containing motif usually generated by viral proteases that process the polyproteins and trigger their ubiquitination and subsequent degradation. Mediates 'Lys-63'-linked polyubiquitination and stabilization of the JUN coactivator RNF187 in response to growth factor signaling via the MEK/ERK pathway, thereby regulating JUN transactivation and cellular proliferation. Promotes the TLR4-mediated signaling activation through its E3 ligase domain leading to production of pro-inflammatory cytokines and type I interferon. Also plays a negative role in the regulation of exogenous cytosolic DNA virus-triggered immune response. Mechanistically, enhances the 'Lys-48'-linked ubiquitination of STING1 leading to its proteasome-dependent degradation. Mediates the ubiquitination of the SIN3-HDAC chromatin remodeling complex component BRMS1. Modulates NCOA4-mediated ferritinophagy and ferroptosis in glioblastoma cells by ubiquitinating NCOA4, leading to its degradation. In terms of biological role, (Microbial infection) Promotes Zika virus replication by mediating envelope protein E ubiquitination. The protein is E3 ubiquitin-protein ligase TRIM7 (TRIM7) of Homo sapiens (Human).